The primary structure comprises 150 residues: Transcription antitermination protein NusB (150 aa).

It belongs to the NusB family.

Functionally, involved in transcription antitermination. Required for transcription of ribosomal RNA (rRNA) genes. Binds specifically to the boxA antiterminator sequence of the ribosomal RNA (rrn) operons. The protein is Transcription antitermination protein NusB of Streptococcus pyogenes serotype M4 (strain MGAS10750).